The sequence spans 376 residues: N-acetyldiaminopimelate deacetylase (376 aa).

Asp69 is a catalytic residue. Glu128 serves as the catalytic Proton acceptor.

Belongs to the peptidase M20A family. N-acetyldiaminopimelate deacetylase subfamily.

The enzyme catalyses N-acetyl-(2S,6S)-2,6-diaminopimelate + H2O = (2S,6S)-2,6-diaminopimelate + acetate. It participates in amino-acid biosynthesis; L-lysine biosynthesis via DAP pathway; LL-2,6-diaminopimelate from (S)-tetrahydrodipicolinate (acetylase route): step 3/3. In terms of biological role, catalyzes the conversion of N-acetyl-diaminopimelate to diaminopimelate and acetate. The chain is N-acetyldiaminopimelate deacetylase from Bacillus cereus (strain ATCC 14579 / DSM 31 / CCUG 7414 / JCM 2152 / NBRC 15305 / NCIMB 9373 / NCTC 2599 / NRRL B-3711).